Reading from the N-terminus, the 345-residue chain is 4-hydroxyproline 2-epimerase (345 aa).

Gln85 contacts substrate. The active-site Proton acceptor is the Ser93. Residues 94-95 and Asp251 contribute to the substrate site; that span reads GS. Cys255 (proton donor) is an active-site residue. 256–257 serves as a coordination point for substrate; that stretch reads GT.

The protein belongs to the proline racemase family.

It carries out the reaction trans-4-hydroxy-L-proline = cis-4-hydroxy-D-proline. Catalyzes the epimerization of trans-4-hydroxy-L-proline (t4LHyp) to cis-4-hydroxy-D-proline (c4DHyp). May be involved in a degradation pathway of t4LHyp, which would allow A.tumefaciens to grow on t4LHyp as a sole carbon source. Can also catalyze the epimerization of trans-3-hydroxy-L-proline (t3LHyp) to cis-3-hydroxy-D-proline (c3DHyp) in vitro. Displays no proline racemase activity. This chain is 4-hydroxyproline 2-epimerase, found in Agrobacterium fabrum (strain C58 / ATCC 33970) (Agrobacterium tumefaciens (strain C58)).